Here is a 414-residue protein sequence, read N- to C-terminus: Serine hydroxymethyltransferase (414 aa).

(6S)-5,6,7,8-tetrahydrofolate is bound by residues L121 and 125–127 (GHL). K230 is modified (N6-(pyridoxal phosphate)lysine).

It belongs to the SHMT family. Homodimer. It depends on pyridoxal 5'-phosphate as a cofactor.

The protein localises to the cytoplasm. It catalyses the reaction (6R)-5,10-methylene-5,6,7,8-tetrahydrofolate + glycine + H2O = (6S)-5,6,7,8-tetrahydrofolate + L-serine. It functions in the pathway one-carbon metabolism; tetrahydrofolate interconversion. Its pathway is amino-acid biosynthesis; glycine biosynthesis; glycine from L-serine: step 1/1. In terms of biological role, catalyzes the reversible interconversion of serine and glycine with tetrahydrofolate (THF) serving as the one-carbon carrier. This reaction serves as the major source of one-carbon groups required for the biosynthesis of purines, thymidylate, methionine, and other important biomolecules. Also exhibits THF-independent aldolase activity toward beta-hydroxyamino acids, producing glycine and aldehydes, via a retro-aldol mechanism. The protein is Serine hydroxymethyltransferase of Acidithiobacillus ferrooxidans (strain ATCC 23270 / DSM 14882 / CIP 104768 / NCIMB 8455) (Ferrobacillus ferrooxidans (strain ATCC 23270)).